We begin with the raw amino-acid sequence, 284 residues long: RNase adapter protein RapZ (284 aa).

G8–S15 serves as a coordination point for ATP. Residue D56 to N59 participates in GTP binding. An RNA-binding region spans residues R266 to Q284.

This sequence belongs to the RapZ-like family. RapZ subfamily. As to quaternary structure, homotrimer.

In terms of biological role, modulates the synthesis of GlmS, by affecting the processing and stability of the regulatory small RNA GlmZ. When glucosamine-6-phosphate (GlcN6P) concentrations are high in the cell, RapZ binds GlmZ and targets it to cleavage by RNase E. Consequently, GlmZ is inactivated and unable to activate GlmS synthesis. Under low GlcN6P concentrations, RapZ is sequestered and inactivated by an other regulatory small RNA, GlmY, preventing GlmZ degradation and leading to synthesis of GlmS. This is RNase adapter protein RapZ from Yersinia pseudotuberculosis serotype O:1b (strain IP 31758).